We begin with the raw amino-acid sequence, 224 residues long: 7-cyano-7-deazaguanine synthase (224 aa).

An ATP-binding site is contributed by 12–22; sequence LSGGLDSSTVT. Zn(2+) contacts are provided by cysteine 193, cysteine 201, cysteine 204, and cysteine 207.

This sequence belongs to the QueC family. Requires Zn(2+) as cofactor.

The enzyme catalyses 7-carboxy-7-deazaguanine + NH4(+) + ATP = 7-cyano-7-deazaguanine + ADP + phosphate + H2O + H(+). It participates in purine metabolism; 7-cyano-7-deazaguanine biosynthesis. Its function is as follows. Catalyzes the ATP-dependent conversion of 7-carboxy-7-deazaguanine (CDG) to 7-cyano-7-deazaguanine (preQ(0)). In Prochlorococcus marinus (strain MIT 9301), this protein is 7-cyano-7-deazaguanine synthase.